Reading from the N-terminus, the 307-residue chain is Ribonuclease Z (307 aa).

Zn(2+) is bound by residues histidine 63, histidine 65, aspartate 67, histidine 68, histidine 141, aspartate 212, and histidine 270. Aspartate 67 acts as the Proton acceptor in catalysis.

It belongs to the RNase Z family. As to quaternary structure, homodimer. It depends on Zn(2+) as a cofactor.

It carries out the reaction Endonucleolytic cleavage of RNA, removing extra 3' nucleotides from tRNA precursor, generating 3' termini of tRNAs. A 3'-hydroxy group is left at the tRNA terminus and a 5'-phosphoryl group is left at the trailer molecule.. In terms of biological role, zinc phosphodiesterase, which displays some tRNA 3'-processing endonuclease activity. Probably involved in tRNA maturation, by removing a 3'-trailer from precursor tRNA. The sequence is that of Ribonuclease Z from Bacillus anthracis (strain A0248).